Reading from the N-terminus, the 323-residue chain is Aspartate carbamoyltransferase catalytic subunit (323 aa).

Carbamoyl phosphate-binding residues include Arg-71 and Thr-72. An L-aspartate-binding site is contributed by Lys-99. Positions 121, 151, and 154 each coordinate carbamoyl phosphate. 2 residues coordinate L-aspartate: Arg-184 and Arg-239. Gly-280 and Pro-281 together coordinate carbamoyl phosphate.

It belongs to the aspartate/ornithine carbamoyltransferase superfamily. ATCase family. As to quaternary structure, heterododecamer (2C3:3R2) of six catalytic PyrB chains organized as two trimers (C3), and six regulatory PyrI chains organized as three dimers (R2).

It catalyses the reaction carbamoyl phosphate + L-aspartate = N-carbamoyl-L-aspartate + phosphate + H(+). It participates in pyrimidine metabolism; UMP biosynthesis via de novo pathway; (S)-dihydroorotate from bicarbonate: step 2/3. Catalyzes the condensation of carbamoyl phosphate and aspartate to form carbamoyl aspartate and inorganic phosphate, the committed step in the de novo pyrimidine nucleotide biosynthesis pathway. This Cupriavidus taiwanensis (strain DSM 17343 / BCRC 17206 / CCUG 44338 / CIP 107171 / LMG 19424 / R1) (Ralstonia taiwanensis (strain LMG 19424)) protein is Aspartate carbamoyltransferase catalytic subunit.